The sequence spans 129 residues: MARDKTRMKRKERKNIAAGVAHVNSSFNNTKILISDVQGNAISWSSAGTMGFKGSRKSTPYAAQMAAEDAAKKAQDHGMKTIEVEVQGPGSGRESALRALAAAGLNITSIRDVTPMAHNGCRPPKRRRV.

This sequence belongs to the universal ribosomal protein uS11 family. Part of the 30S ribosomal subunit. Interacts with proteins S7 and S18. Binds to IF-3.

Functionally, located on the platform of the 30S subunit, it bridges several disparate RNA helices of the 16S rRNA. Forms part of the Shine-Dalgarno cleft in the 70S ribosome. The sequence is that of Small ribosomal subunit protein uS11 from Cereibacter sphaeroides (strain ATCC 17029 / ATH 2.4.9) (Rhodobacter sphaeroides).